A 475-amino-acid chain; its full sequence is MKMLSTKATCNSHGQDSSYFLGWEAYENNPFHHTSNPNGIIQMGLAENQLSFDLLESWLSKNPDAASFKRDGKSIFRELALFQDYHGLPAFKKALVEFMAEIRGNKVSFEANNIVLTAGATSANETLMFCLAEAGDAFLLPTPYYPGFDRDLKWRTGVEIVPIHCTSSNGFQITQSALEQAYKDAQTRNLRVKGVLVTNPSNPLGTTMNRDELNLVFDFITSKGIHLISDEIYSGTVFGSPGFVSAMEVLKERSSEDEEVWKRVHIVYSLSKDLGLPGFRVGAIYSNDDMVVAAATKMSSFGLVSSQTQYLLSAMLSDKKFTISYISENQKRLKQRQKMLVSGLQKAGINCLDSNAGLFCWVDMRHLLESDKFESELELWKKIVYEVGLNISPGSSCHCTEPGWFRVCFANMSESTLKLAVRRLKSFVTELRSTTTSNHRNHDNKICKNIKKNIFTKWVFRQSAQEANRKMQAER.

Lys-272 is modified (N6-(pyridoxal phosphate)lysine).

The protein belongs to the class-I pyridoxal-phosphate-dependent aminotransferase family. Homodimer. Pyridoxal 5'-phosphate serves as cofactor.

It carries out the reaction S-adenosyl-L-methionine = 1-aminocyclopropane-1-carboxylate + S-methyl-5'-thioadenosine + H(+). Its pathway is alkene biosynthesis; ethylene biosynthesis via S-adenosyl-L-methionine; ethylene from S-adenosyl-L-methionine: step 1/2. Functionally, catalyzes the formation of 1-aminocyclopropane-1-carboxylate, a direct precursor of ethylene in higher plants. The sequence is that of 1-aminocyclopropane-1-carboxylate synthase CMA101 (ACS2) from Cucurbita maxima (Pumpkin).